We begin with the raw amino-acid sequence, 272 residues long: 1,4-dihydroxy-6-naphtoate synthase (272 aa).

Residues Lys-55 to Ser-57 and Thr-107 to Ala-108 contribute to the substrate site. The active-site Proton acceptor is His-145.

The protein belongs to the MqnA/MqnD family. MqnD subfamily.

The enzyme catalyses cyclic dehypoxanthinylfutalosinate = 1,4-dihydroxy-6-naphthoate + dihydroxyacetone. Its pathway is quinol/quinone metabolism; menaquinone biosynthesis. In terms of biological role, catalyzes the conversion of cyclic dehypoxanthine futalosine (cyclic DHFL) into 1,4-dihydroxy-6-naphthoate, a step in the biosynthesis of menaquinone (MK, vitamin K2). In Thermus thermophilus (strain ATCC 27634 / DSM 579 / HB8), this protein is 1,4-dihydroxy-6-naphtoate synthase.